The following is a 318-amino-acid chain: NADH-ubiquinone oxidoreductase chain 1 (318 aa).

The next 8 membrane-spanning stretches (helical) occupy residues 2–22, 69–89, 102–122, 146–166, 171–191, 222–242, 253–273, and 294–314; these read FLIN…FLTL, LLFI…WLPI, ILFI…SGWA, LAII…SSLI, YMWI…STLA, LFFL…AILF, EMFT…FLWI, and LPLT…LSSI.

The protein belongs to the complex I subunit 1 family. As to quaternary structure, core subunit of respiratory chain NADH dehydrogenase (Complex I) which is composed of 45 different subunits.

It is found in the mitochondrion inner membrane. The catalysed reaction is a ubiquinone + NADH + 5 H(+)(in) = a ubiquinol + NAD(+) + 4 H(+)(out). In terms of biological role, core subunit of the mitochondrial membrane respiratory chain NADH dehydrogenase (Complex I) which catalyzes electron transfer from NADH through the respiratory chain, using ubiquinone as an electron acceptor. Essential for the catalytic activity and assembly of complex I. The polypeptide is NADH-ubiquinone oxidoreductase chain 1 (MT-ND1) (Oryctolagus cuniculus (Rabbit)).